Here is a 203-residue protein sequence, read N- to C-terminus: Recombination protein RecR (203 aa).

Residues 57–73 (CQSCGTLKSNSLGCNNC) form a C4-type zinc finger. The Toprim domain maps to 81-175 (NKICVVEDIA…KVTKLAQGLP (95 aa)).

It belongs to the RecR family.

May play a role in DNA repair. It seems to be involved in an RecBC-independent recombinational process of DNA repair. It may act with RecF and RecO. This is Recombination protein RecR from Pelagibacter ubique (strain HTCC1062).